The primary structure comprises 548 residues: Glutamate--tRNA ligase (548 aa).

The 'HIGH' region motif lies at Pro102–His112.

It belongs to the class-I aminoacyl-tRNA synthetase family. Glutamate--tRNA ligase type 2 subfamily.

It is found in the cytoplasm. The catalysed reaction is tRNA(Glu) + L-glutamate + ATP = L-glutamyl-tRNA(Glu) + AMP + diphosphate. Catalyzes the attachment of glutamate to tRNA(Glu) in a two-step reaction: glutamate is first activated by ATP to form Glu-AMP and then transferred to the acceptor end of tRNA(Glu). The protein is Glutamate--tRNA ligase of Thermoplasma acidophilum (strain ATCC 25905 / DSM 1728 / JCM 9062 / NBRC 15155 / AMRC-C165).